The sequence spans 639 residues: Serine protease HtrA-like (639 aa).

Basic and acidic residues-rich tracts occupy residues 1–13 (MDND…PREQ), 21–75 (YFHN…EIHQ), 106–187 (QQLK…KESS), and 195–205 (KSQKIEQKEQK). Residues 1–262 (MDNDKKHVIP…LENEPKNNDT (262 aa)) are disordered. Residues 206–219 (ASSNETSNKELNSY) show a composition bias toward polar residues. Composition is skewed to basic and acidic residues over residues 220–235 (TKDK…DLKK) and 245–262 (NKLE…NNDT). Residues 277 to 297 (IVIVVAIILIVILISAIISTM) form a helical membrane-spanning segment. Residues His374, Asp404, and Ser489 each act as charge relay system in the active site. In terms of domain architecture, PDZ spans 527-629 (EIAEELEKKG…TLSAKIYREG (103 aa)).

This sequence belongs to the peptidase S1C family.

It localises to the cell membrane. This is Serine protease HtrA-like from Staphylococcus haemolyticus (strain JCSC1435).